We begin with the raw amino-acid sequence, 171 residues long: Macro domain-containing protein RSc0334 (171 aa).

A Macro domain is found at 1-171 (MPIPTVTLRA…LYETALNEAR (171 aa)).

The protein belongs to the MacroD-type family.

This chain is Macro domain-containing protein RSc0334, found in Ralstonia nicotianae (strain ATCC BAA-1114 / GMI1000) (Ralstonia solanacearum).